Here is an 84-residue protein sequence, read N- to C-terminus: Small ribosomal subunit protein bS20 (84 aa).

This sequence belongs to the bacterial ribosomal protein bS20 family.

In terms of biological role, binds directly to 16S ribosomal RNA. The chain is Small ribosomal subunit protein bS20 from Phocaeicola vulgatus (strain ATCC 8482 / DSM 1447 / JCM 5826 / CCUG 4940 / NBRC 14291 / NCTC 11154) (Bacteroides vulgatus).